The following is a 335-amino-acid chain: UPF0353 protein Mflv_3659 (335 aa).

2 helical membrane-spanning segments follow: residues 18–38 (WFFLFFFVVIGLVALYIVVQL) and 67–87 (LPAVLMILSLVSFTIAMAGPT). The 197-residue stretch at 98–294 (VVMLVIDVSQ…EQLKQVFTNL (197 aa)) folds into the VWFA domain. The chain crosses the membrane as a helical span at residues 309-329 (VGWLRLGAGVLALAALGALLI).

Belongs to the UPF0353 family.

The protein localises to the cell membrane. The polypeptide is UPF0353 protein Mflv_3659 (Mycolicibacterium gilvum (strain PYR-GCK) (Mycobacterium gilvum (strain PYR-GCK))).